The chain runs to 383 residues: Transposase InsI for insertion sequence element IS30A (383 aa).

The region spanning 213-379 is the Integrase catalytic domain; that stretch reads VNGTPIHERS…TPKEIIERGV (167 aa).

This sequence belongs to the transposase IS30 family.

Its function is as follows. Required for the transposition of the insertion element. In Escherichia coli (strain K12), this protein is Transposase InsI for insertion sequence element IS30A (insI1).